The sequence spans 668 residues: Endoplasmic reticulum oxidoreductin-1 (668 aa).

The first 22 residues, 1–22, serve as a signal peptide directing secretion; that stretch reads MKPASRLFYLSLFALWSPEAQC. Disulfide bonds link C79/C413, C89/C94, C150/C352, and C416/C419. Residues 116–142 are disordered; sequence KLEGPRAKHPGKSVQKEEPKRPLQGKL. 5 residues coordinate FAD: R186, T188, W199, S282, and H285. Residues N298 and N307 are each glycosylated (N-linked (GlcNAc...) asparagine). Position 314 (R314) interacts with FAD. The N-linked (GlcNAc...) asparagine glycan is linked to N406. Residue C416 is the Nucleophile of the active site. Residue C419 is part of the active site. Residue N443 is glycosylated (N-linked (GlcNAc...) asparagine). Disordered regions lie at residues 488 to 519 and 554 to 597; these read VEESEEGQQPQSHEQIEGSENSGAHHIPDRAK and GVTP…DPNF. Residues 494–509 show a composition bias toward polar residues; that stretch reads GQQPQSHEQIEGSENS. Positions 570–581 are enriched in acidic residues; the sequence is DNNDDDDDDDEF.

The protein belongs to the EROs family. As to quaternary structure, may function both as a monomer and a homodimer. The cofactor is FAD.

The protein localises to the endoplasmic reticulum membrane. Essential oxidoreductase that oxidizes proteins in the endoplasmic reticulum to produce disulfide bonds. Acts by oxidizing directly pdi1 isomerase through a direct disulfide exchange. Does not act as a direct oxidant of folding substrate, but relies on pdi1 to transfer oxidizing equivalent. Does not oxidize all pdi related proteins, suggesting that it can discriminate between pdi1 and related proteins. Its reoxidation probably involves electron transfer to molecular oxygen via FAD. Acts independently of glutathione. May be responsible for a significant proportion of reactive oxygen species (ROS) in the cell, thereby being a source of oxidative stress. The protein is Endoplasmic reticulum oxidoreductin-1 (ero-1) of Neurospora crassa (strain ATCC 24698 / 74-OR23-1A / CBS 708.71 / DSM 1257 / FGSC 987).